The following is a 692-amino-acid chain: PTS system glucoside-specific EIICBA component (692 aa).

The PTS EIIC type-1 domain occupies 6-430 (KKFFGQLQRI…LNLKTPGRED (425 aa)). The next 10 membrane-spanning stretches (helical) occupy residues 15-35 (IGKA…LLTF), 84-104 (LGLA…YLIM), 140-160 (LVLG…IGAL), 185-205 (FVPI…SFVW), 215-235 (LSNF…GIIE), 287-307 (AFTT…AFAI), 318-338 (VVGG…ITEP), 344-364 (LFVA…SFLI), 370-390 (VQIG…GLLS), and 398-418 (LVIP…TFLI). The PTS EIIB type-1 domain maps to 441–522 (SELPFEVLEA…QQIMDGKITS (82 aa)). Cys-463 acts as the Phosphocysteine intermediate; for EIIB activity in catalysis. In terms of domain architecture, PTS EIIA type-1 spans 563–667 (DKVFSAKMMG…DTITPIIITN (105 aa)). Residue His-615 is the Tele-phosphohistidine intermediate; for EIIA activity of the active site.

The protein resides in the cell membrane. Its activity is regulated as follows. Inhibited by methyl alpha-D-glucoside, methyl beta-D-glucoside, p-nitrophenyl alpha-D-glucoside, o-nitrophenyl beta-D-glucoside and salicin, but not by 2-deoxyglucose. Its function is as follows. The phosphoenolpyruvate-dependent sugar phosphotransferase system (sugar PTS), a major carbohydrate active -transport system, catalyzes the phosphorylation of incoming sugar substrates concomitantly with their translocation across the cell membrane. This system is involved in alpha- and beta-glucoside transport. Can also transport glucose, but not galactose, fructose, mannose, cellobiose, sucrose, maltose, lactose, melibiose and trehalose, as well as N-acetylglucosamine. The protein is PTS system glucoside-specific EIICBA component (glcB) of Staphylococcus carnosus (strain TM300).